Reading from the N-terminus, the 353-residue chain is Photosystem II protein D1 (353 aa).

N-acetylthreonine is present on T2. A Phosphothreonine modification is found at T2. Helical transmembrane passes span Y29 to S46, H118 to L133, and W142 to A156. Chlorophyll a is bound at residue H118. Y126 provides a ligand contact to pheophytin a. 2 residues coordinate [CaMn4O5] cluster: D170 and E189. The chain crosses the membrane as a helical span at residues F197 to L218. Position 198 (H198) interacts with chlorophyll a. Residues H215 and S264–F265 each bind a quinone. H215 is a Fe cation binding site. Position 272 (H272) interacts with Fe cation. The helical transmembrane segment at F274–L288 threads the bilayer. [CaMn4O5] cluster contacts are provided by H332, E333, D342, and A344. Positions A345–G353 are excised as a propeptide.

Belongs to the reaction center PufL/M/PsbA/D family. As to quaternary structure, PSII is composed of 1 copy each of membrane proteins PsbA, PsbB, PsbC, PsbD, PsbE, PsbF, PsbH, PsbI, PsbJ, PsbK, PsbL, PsbM, PsbT, PsbX, PsbY, PsbZ, Psb30/Ycf12, at least 3 peripheral proteins of the oxygen-evolving complex and a large number of cofactors. It forms dimeric complexes. Requires The D1/D2 heterodimer binds P680, chlorophylls that are the primary electron donor of PSII, and subsequent electron acceptors. It shares a non-heme iron and each subunit binds pheophytin, quinone, additional chlorophylls, carotenoids and lipids. D1 provides most of the ligands for the Mn4-Ca-O5 cluster of the oxygen-evolving complex (OEC). There is also a Cl(-1) ion associated with D1 and D2, which is required for oxygen evolution. The PSII complex binds additional chlorophylls, carotenoids and specific lipids. as cofactor. In terms of processing, tyr-161 forms a radical intermediate that is referred to as redox-active TyrZ, YZ or Y-Z. Post-translationally, C-terminally processed by CTPA; processing is essential to allow assembly of the oxygen-evolving complex and thus photosynthetic growth.

Its subcellular location is the plastid. The protein localises to the chloroplast thylakoid membrane. It carries out the reaction 2 a plastoquinone + 4 hnu + 2 H2O = 2 a plastoquinol + O2. Functionally, photosystem II (PSII) is a light-driven water:plastoquinone oxidoreductase that uses light energy to abstract electrons from H(2)O, generating O(2) and a proton gradient subsequently used for ATP formation. It consists of a core antenna complex that captures photons, and an electron transfer chain that converts photonic excitation into a charge separation. The D1/D2 (PsbA/PsbD) reaction center heterodimer binds P680, the primary electron donor of PSII as well as several subsequent electron acceptors. The polypeptide is Photosystem II protein D1 (Sinapis alba (White mustard)).